We begin with the raw amino-acid sequence, 1418 residues long: Protein ced-11 (1418 aa).

A run of 7 helical transmembrane segments spans residues 617 to 637 (FPIF…IIPV), 755 to 775 (YWLS…SVVL), 782 to 802 (LWDT…CFVL), 818 to 838 (VFDV…KVFP), 856 to 876 (VVSA…YIPL), 898 to 918 (FLFM…AVVF), and 986 to 1006 (IVIE…FAFF).

It is found in the membrane. Functionally, plays a major role in programmed cell death. In Caenorhabditis elegans, this protein is Protein ced-11 (ced-11).